Consider the following 324-residue polypeptide: AT-hook motif nuclear-localized protein 24 (324 aa).

The segment covering 1–12 (MDPVQSHGSQSS) has biased composition (polar residues). Disordered stretches follow at residues 1–122 (MDPV…KPPI) and 262–324 (MQTP…RPPY). The span at 24–33 (LHLQQQQQEF) shows a compositional bias: low complexity. The span at 69–79 (NIDNIANNSGS) shows a compositional bias: polar residues. The span at 88–99 (GGSGEGGGGSGG) shows a compositional bias: gly residues. The segment at residues 105 to 117 (RRPRGRPAGSKNK) is a DNA-binding region (a.T hook). Residues 129 to 268 (ANALRTHVME…EDEMQTPVHG (140 aa)) enclose the PPC domain. Residues 280-297 (MMGQQLQHQQQAMSGHQG) show a composition bias toward low complexity. Residues 304 to 318 (GSVQLQQQHDQSYWS) are compositionally biased toward polar residues.

The protein resides in the nucleus. Its function is as follows. Transcription factor that specifically binds AT-rich DNA sequences related to the nuclear matrix attachment regions (MARs). The sequence is that of AT-hook motif nuclear-localized protein 24 from Arabidopsis thaliana (Mouse-ear cress).